Consider the following 171-residue polypeptide: Transcriptional repressor NrdR (171 aa).

The segment at 3–34 (CPFCGDPNTQVADTRENEGGEVVRRRRRCPKC) is a zinc-finger region. The ATP-cone domain maps to 49–139 (PHIVKRNGNR…VYRNFADVDE (91 aa)). The disordered stretch occupies residues 148-171 (KARPKRNRPAEPPEPTSENDLFRS).

It belongs to the NrdR family. Requires Zn(2+) as cofactor.

In terms of biological role, negatively regulates transcription of bacterial ribonucleotide reductase nrd genes and operons by binding to NrdR-boxes. This Aromatoleum aromaticum (strain DSM 19018 / LMG 30748 / EbN1) (Azoarcus sp. (strain EbN1)) protein is Transcriptional repressor NrdR.